A 274-amino-acid chain; its full sequence is Kit ligand (274 aa).

The first 25 residues, 1–25 (MKKTQTWIITCIYLQLLLFNPLVHT), serve as a signal peptide directing secretion. Q26 is subject to Pyrrolidone carboxylic acid. The Extracellular segment spans residues 26–215 (QGICSNRVTD…SNSIEDSSLQ (190 aa)). 2 disulfides stabilise this stretch: C29–C114 and C68–C164. N-linked (GlcNAc...) asparagine glycans are attached at residues N90, N145, and N196. Residues 216–238 (WAAVALPAFFSLVIGFAFGAFYW) form a helical membrane-spanning segment. The Cytoplasmic segment spans residues 239–274 (KKKQPNLTRTVENRQINEEDNEISMLQEKEREFQEV).

Belongs to the SCF family. In terms of assembly, homodimer, non-covalently linked. Post-translationally, a soluble form is produced by proteolytic processing of isoform 1 in the extracellular domain.

It localises to the cell membrane. It is found in the cytoplasm. The protein resides in the cytoskeleton. The protein localises to the cell projection. Its subcellular location is the lamellipodium. It localises to the filopodium. It is found in the secreted. Stimulates the proliferation of mast cells. Able to augment the proliferation of both myeloid and lymphoid hematopoietic progenitors in bone marrow culture. Also mediates cell-cell adhesion. Acts synergistically with other cytokines, probably interleukins. The sequence is that of Kit ligand (KITLG) from Bos taurus (Bovine).